Reading from the N-terminus, the 536-residue chain is Arylsulfatase (536 aa).

Residues aspartate 13, aspartate 14, and cysteine 51 each coordinate Ca(2+). The active-site Nucleophile is the cysteine 51. Cysteine 51 carries the 3-oxoalanine (Cys) modification. Residue histidine 115 is part of the active site. Ca(2+)-binding residues include aspartate 317 and asparagine 318.

Belongs to the sulfatase family. Monomer. Requires Ca(2+) as cofactor. Post-translationally, the conversion to 3-oxoalanine (also known as C-formylglycine, FGly), of a serine or cysteine residue in prokaryotes and of a cysteine residue in eukaryotes, is critical for catalytic activity.

It is found in the cytoplasm. The catalysed reaction is an aryl sulfate + H2O = a phenol + sulfate + H(+). In terms of biological role, hydrolyzes the bond between sulfate and the aromatic ring in a compound such as 4-nitrocatechol sulfate. The polypeptide is Arylsulfatase (atsA) (Pseudomonas aeruginosa (strain ATCC 15692 / DSM 22644 / CIP 104116 / JCM 14847 / LMG 12228 / 1C / PRS 101 / PAO1)).